We begin with the raw amino-acid sequence, 260 residues long: CD27 antigen (260 aa).

The signal sequence occupies residues 1-19; the sequence is MARPHPWWLCVLGTLVGLS. Residues 20–191 are Extracellular-facing; the sequence is ATPAPKSCPE…RSLCSSDFIR (172 aa). TNFR-Cys repeat units follow at residues 26-63, 64-104, and 105-141; these read SCPERHYWAQGKLCCQMCEPGTFLVKDCDQHRKAAQCD, PCIP…NAEC, and ACRNGWQCRDKECTECDPLPNPSLTARSSQALSPHPQ. 8 disulfides stabilise this stretch: cysteine 27–cysteine 39, cysteine 40–cysteine 53, cysteine 43–cysteine 62, cysteine 65–cysteine 81, cysteine 84–cysteine 96, cysteine 87–cysteine 104, cysteine 106–cysteine 120, and cysteine 112–cysteine 117. Asparagine 95 carries an N-linked (GlcNAc...) asparagine glycan. The O-linked (GalNAc...) serine glycan is linked to serine 127. The chain crosses the membrane as a helical span at residues 192–212; sequence ILVIFSGMFLVFTLAGALFLH. Topologically, residues 213–260 are cytoplasmic; that stretch reads QRRKYRSNKGESPVEPAEPCHYSCPREEEGSTIPIQEDYRKPEPACSP. Serine 219 carries the phosphoserine modification. The disordered stretch occupies residues 219–260; it reads SNKGESPVEPAEPCHYSCPREEEGSTIPIQEDYRKPEPACSP. The segment covering 249–260 has biased composition (basic and acidic residues); sequence EDYRKPEPACSP.

Homodimer. Interacts with SIVA1; may play a role in apoptosis through association with SIVA1. Interacts with TRAF2. Interacts ith PTPN6. Phosphorylated. In terms of processing, N-glycosylated. Post-translationally, O-glycosylated with core 1 or possibly core 8 glycans. As to expression, found in most T-lymphocytes.

The protein localises to the cell membrane. In terms of biological role, costimulatory immune-checkpoint receptor expressed at the surface of T-cells, NK-cells and B-cells which binds to and is activated by its ligand CD70/CD27L expressed by B-cells. The CD70-CD27 signaling pathway mediates antigen-specific T-cell activation and expansion which in turn provides immune surveillance of B-cells. Mechanistically, CD70 ligation activates the TRAF2-PTPN6 axis that subsequently inhibits LCK phosphorylation to promote phenotypic and transcriptional adaptations of T-cell memory. In addition, activation by CD70 on early progenitor cells provides a negative feedback signal to leukocyte differentiation during immune activation and thus modulates hematopoiesis. Negatively regulates the function of Th2 lymphocytes in the adipose tissue. The sequence is that of CD27 antigen from Homo sapiens (Human).